A 414-amino-acid chain; its full sequence is MIOREX complex component 10 (414 aa).

The transit peptide at 1-29 (MLSFRSLTSTFGFVSRFQIRRLGTSLSIQ) directs the protein to the mitochondrion. Residues 30 to 373 (NLEVQDGRWK…ISLLNERNST (344 aa)) are Mitochondrial matrix-facing. A helical transmembrane segment spans residues 374–394 (FLEWIIIYLIAFELCFEIYHF). The Mitochondrial intermembrane segment spans residues 395-414 (YQKYSSYCSEPTNDDLDATK).

Belongs to the RMD1/sif2 family. In terms of assembly, associates with the mitochondrial ribosome.

Its subcellular location is the mitochondrion inner membrane. Component of MIOREX complexes, large expressome-like assemblies of ribosomes with factors involved in all the steps of post-transcriptional gene expression. The sequence is that of MIOREX complex component 10 from Saccharomyces cerevisiae (strain ATCC 204508 / S288c) (Baker's yeast).